Here is a 234-residue protein sequence, read N- to C-terminus: MRTFNDFSGLPADRPKLTARQAQILELIRNAIAQTGAPPTRAEIAAELGFRSPNAAEEHLKALAKKGVIELVSGTSRGIRLRTDSLQALNESRISQFSPPVQRLEQLTLPLVGRVAAGSPILAQEHIERTYFFESRLFEQQPDYLLKVRGMSMRDIGIMDGDLLAVKQAREAKNGQIVVARLGDEVTVKRFHRNQHLIELLSENPDFKPIVVQPGEPFELEGLAVGLIRGSLAM.

The segment at residues 41–61 (RAEIAAELGFRSPNAAEEHLK) is a DNA-binding region (H-T-H motif). Catalysis depends on for autocatalytic cleavage activity residues Ser152 and Lys189.

The protein belongs to the peptidase S24 family. Homodimer.

It catalyses the reaction Hydrolysis of Ala-|-Gly bond in repressor LexA.. Functionally, represses a number of genes involved in the response to DNA damage (SOS response), including recA and lexA. In the presence of single-stranded DNA, RecA interacts with LexA causing an autocatalytic cleavage which disrupts the DNA-binding part of LexA, leading to derepression of the SOS regulon and eventually DNA repair. This is LexA repressor from Polaromonas naphthalenivorans (strain CJ2).